A 748-amino-acid polypeptide reads, in one-letter code: Formate acetyltransferase (748 aa).

A PFL domain is found at 5–618 (NNHTNAWQGF…KTGNTPDGRK (614 aa)). The S-acetylcysteine intermediate role is filled by Cys412. The active-site Cysteine radical intermediate is Cys413. The 124-residue stretch at 625-748 (PGANPMHGRD…VISRTFHESM (124 aa)) folds into the Glycine radical domain. The residue at position 723 (Gly723) is a Glycine radical.

This sequence belongs to the glycyl radical enzyme (GRE) family. PFL subfamily. As to quaternary structure, homodimer.

The protein resides in the cytoplasm. It catalyses the reaction formate + acetyl-CoA = pyruvate + CoA. Its pathway is fermentation; pyruvate fermentation; formate from pyruvate: step 1/1. Catalyzes the conversion of pyruvate to formate and acetyl-CoA. In Staphylococcus epidermidis (strain ATCC 35984 / DSM 28319 / BCRC 17069 / CCUG 31568 / BM 3577 / RP62A), this protein is Formate acetyltransferase (pflB).